The sequence spans 296 residues: Acetylglutamate kinase (296 aa).

Residues Gly-67–Gly-68, Arg-89, and Asn-194 contribute to the substrate site.

It belongs to the acetylglutamate kinase family. ArgB subfamily.

Its subcellular location is the cytoplasm. It carries out the reaction N-acetyl-L-glutamate + ATP = N-acetyl-L-glutamyl 5-phosphate + ADP. The protein operates within amino-acid biosynthesis; L-arginine biosynthesis; N(2)-acetyl-L-ornithine from L-glutamate: step 2/4. Functionally, catalyzes the ATP-dependent phosphorylation of N-acetyl-L-glutamate. The polypeptide is Acetylglutamate kinase (Brucella canis (strain ATCC 23365 / NCTC 10854 / RM-666)).